Here is a 356-residue protein sequence, read N- to C-terminus: tRNA N6-adenosine threonylcarbamoyltransferase (356 aa).

Fe cation is bound by residues H131 and H135. Residues 154-158 (LVSGG), D187, G200, and N289 contribute to the substrate site. D317 lines the Fe cation pocket.

The protein belongs to the KAE1 / TsaD family. The cofactor is Fe(2+).

It is found in the cytoplasm. The catalysed reaction is L-threonylcarbamoyladenylate + adenosine(37) in tRNA = N(6)-L-threonylcarbamoyladenosine(37) in tRNA + AMP + H(+). Required for the formation of a threonylcarbamoyl group on adenosine at position 37 (t(6)A37) in tRNAs that read codons beginning with adenine. Is involved in the transfer of the threonylcarbamoyl moiety of threonylcarbamoyl-AMP (TC-AMP) to the N6 group of A37, together with TsaE and TsaB. TsaD likely plays a direct catalytic role in this reaction. The protein is tRNA N6-adenosine threonylcarbamoyltransferase of Ruthia magnifica subsp. Calyptogena magnifica.